The chain runs to 3712 residues: Laminin subunit alpha (3712 aa).

The signal sequence occupies residues 1–22 (MGHGVASIGALLVILAISYCQA). The region spanning 23 to 272 (ELTPPYFNLA…SIKDISIGGR (250 aa)) is the Laminin N-terminal domain. N116 and N219 each carry an N-linked (GlcNAc...) asparagine glycan. Cystine bridges form between C273/C282, C275/C296, C298/C307, C310/C330, C333/C342, C335/C367, C370/C379, C382/C400, C403/C414, C405/C421, C423/C432, C435/C445, C448/C460, C450/C468, C470/C479, C482/C492, C495/C507, C497/C514, C516/C525, C528/C538, C541/C553, C543/C560, C562/C571, C574/C584, C587/C599, C589/C605, C607/C616, C619/C629, C632/C644, C634/C650, C652/C661, C664/C674, C677/C691, C679/C700, C702/C711, C714/C729, C732/C746, C734/C753, C755/C764, C767/C782, C785/C797, C787/C804, and C806/C815. Laminin EGF-like domains are found at residues 273–332 (CMCN…NCEP), 333–402 (CNCH…VCSP), 403–447 (CQCD…NCRE), 448–494 (CECN…ECKA), 495–540 (CECN…TCSY), 541–586 (CDCD…DCKP), 587–631 (CNCS…DCLP), 632–676 (CHCD…SCED), 677–731 (CNCD…GCEI), and 732–784 (CDCW…GCKD). N395 carries N-linked (GlcNAc...) asparagine glycosylation. Residue N453 is glycosylated (N-linked (GlcNAc...) asparagine). N508 carries N-linked (GlcNAc...) asparagine glycosylation. N588 carries N-linked (GlcNAc...) asparagine glycosylation. N-linked (GlcNAc...) asparagine glycosylation occurs at N722. One can recognise a Laminin EGF-like 11; truncated domain in the interval 785–815 (CSCDVGGSWQSVCDKISGQCKCHPRITGLAC). A domain IV'' region spans residues 816-1374 (TQPLTTHFFP…TADYNSGALP (559 aa)). N-linked (GlcNAc...) asparagine glycans are attached at residues N897 and N1352. 16 cysteine pairs are disulfide-bonded: C1375-C1387, C1377-C1394, C1396-C1405, C1408-C1418, C1421-C1429, C1423-C1436, C1438-C1447, C1450-C1463, C1466-C1480, C1468-C1487, C1489-C1498, C1501-C1511, C1514-C1526, C1516-C1533, C1535-C1544, and C1547-C1562. 4 Laminin EGF-like domains span residues 1375–1420 (CNCD…DCKP), 1421–1465 (CKCP…GCEE), 1466–1513 (CACN…HCEQ), and 1514–1564 (CSCH…GCTT). N1484 carries an N-linked (GlcNAc...) asparagine glycan. The region spanning 1565–1574 (CFCFGKTSRC) is the Laminin EGF-like 16; first part domain. N1583 and N1617 each carry an N-linked (GlcNAc...) asparagine glycan. The 191-residue stretch at 1585-1775 (SLLKHVSITT…GEYQFLAVER (191 aa)) folds into the Laminin IV type A domain. Positions 1776–1808 (CSCPPGYSGHSCEDCAPGYYRDPSGPYGGYCIP) constitute a Laminin EGF-like 16; second part domain. 26 cysteine pairs are disulfide-bonded: C1778-C1787, C1790-C1806, C1809-C1818, C1811-C1825, C1828-C1837, C1840-C1856, C1859-C1874, C1861-C1885, C1887-C1896, C1899-C1914, C1917-C1931, C1919-C1938, C1941-C1950, C1953-C1967, C1970-C1980, C1972-C1987, C1989-C1998, C2001-C2014, C2017-C2028, C2019-C2035, C2037-C2046, C2049-C2061, C2064-C2076, C2066-C2083, C2085-C2094, and C2097-C2109. 6 Laminin EGF-like domains span residues 1809 to 1858 (CECN…DCMI), 1859 to 1916 (CACP…VCKP), 1917 to 1969 (CECS…NCQS), 1970 to 2016 (CDCD…GCRA), 2017 to 2063 (CDCG…GCTP), and 2064 to 2111 (CNCN…GCQE). N-linked (GlcNAc...) asparagine glycosylation occurs at N1847. N-linked (GlcNAc...) asparagine glycosylation occurs at N1943. N2024 is a glycosylation site (N-linked (GlcNAc...) asparagine). A domain II and I region spans residues 2112-2671 (CNNCHHALLD…EAARQLANSI (560 aa)). Residues 2178–2249 (KKANSELESD…LSKNLEAAAS (72 aa)) are a coiled coil. N2196, N2215, N2267, N2301, and N2323 each carry an N-linked (GlcNAc...) asparagine glycan. Positions 2301–2321 (NKSLNALKNDIGEFSDHLEDL) form a coiled coil. Residues 2376–2450 (DLTLNQINQK…QYTDMTASAE (75 aa)) are a coiled coil. Residues N2482, N2524, N2538, N2569, N2699, N2720, N2890, N2938, and N3010 are each glycosylated (N-linked (GlcNAc...) asparagine). The stretch at 2541–2676 (EHQLKDINKL…LANSIKVGVN (136 aa)) forms a coiled coil. Laminin G-like domains are found at residues 2672-2868 (KVGV…ERDV), 2876-3048 (VTGL…EEGC), and 3055-3223 (VVSY…INGC). The cysteines at positions 3022 and 3048 are disulfide-linked. A glycan (N-linked (GlcNAc...) asparagine) is linked at N3070. Cysteines 3196 and 3223 form a disulfide. A disordered region spans residues 3244 to 3297 (NEVESPWSNADTLPPLKPDIESTLPPTTPTTTTTTTTTTTSTTTTSTTTTTTTP). Residues 3265–3297 (STLPPTTPTTTTTTTTTTTSTTTTSTTTTTTTP) are compositionally biased toward low complexity. 2 Laminin G-like domains span residues 3349 to 3528 (GYRF…VVPC) and 3534 to 3709 (RGLF…QGYC). N3491 carries an N-linked (GlcNAc...) asparagine glycan. A disulfide bridge connects residues C3505 and C3528. N-linked (GlcNAc...) asparagine glycosylation occurs at N3612. C3682 and C3709 are disulfide-bonded.

In terms of assembly, laminin is a complex glycoprotein, consisting of three different polypeptide chains (alpha, beta, gamma), which are bound to each other by disulfide bonds into a cross-shaped molecule comprising one long and three short arms with globules at each end. Newly formed mesoderm and later prominently expressed in hemocytes, which also synthesize collagen IV. Expressed in muscles.

The protein localises to the secreted. The protein resides in the extracellular space. It localises to the extracellular matrix. Its subcellular location is the basement membrane. It is found in the synapse. The protein localises to the cell projection. The protein resides in the axon. It localises to the cytoplasmic vesicle. Its subcellular location is the secretory vesicle. It is found in the synaptic vesicle. Its function is as follows. Binding to cells via a high affinity receptor, laminin is thought to mediate the attachment, migration and organization of cells into tissues during embryonic development by interacting with other extracellular matrix components. Activates presynaptic signaling involving integrin alpha-PS3/beta-nu and Fak to suppress neuromuscular junction (NMJ) growth during larval development and during low crawling activity, but not during higher-crawling conditions. Mediates, together with integrin alpha-PS3/beta-nu, glutamate receptor-modulated NMJ growth. The chain is Laminin subunit alpha (LanA) from Drosophila melanogaster (Fruit fly).